A 409-amino-acid chain; its full sequence is Microfibrillar-associated protein 3-like (409 aa).

The signal sequence occupies residues methionine 1 to alanine 28. Over lysine 29–aspartate 148 the chain is Extracellular. N-linked (GlcNAc...) asparagine glycosylation is found at asparagine 33, asparagine 37, asparagine 67, asparagine 111, and asparagine 135. The 95-residue stretch at proline 47–arginine 141 folds into the Ig-like C2-type domain. Cysteines 68 and 125 form a disulfide. The chain crosses the membrane as a helical span at residues methionine 149–isoleucine 169. The Cytoplasmic portion of the chain corresponds to threonine 170 to valine 409. Tyrosine 287 carries the post-translational modification Phosphotyrosine. Residues serine 298, serine 303, serine 306, and serine 307 each carry the phosphoserine modification. The segment at valine 319–glutamate 392 is disordered. The span at glutamine 333–proline 348 shows a compositional bias: acidic residues. The segment covering aspartate 362–glutamate 372 has biased composition (polar residues).

It is found in the cell membrane. The protein resides in the nucleus. The protein localises to the cytoplasm. Its function is as follows. May participate in the nuclear signaling of EGFR and MAPK1/ERK2. This is Microfibrillar-associated protein 3-like (Mfap3l) from Rattus norvegicus (Rat).